Here is a 377-residue protein sequence, read N- to C-terminus: Nitric oxide reductase FlRd-NAD(+) reductase (377 aa).

It belongs to the FAD-dependent oxidoreductase family. It depends on FAD as a cofactor.

It is found in the cytoplasm. The enzyme catalyses 2 reduced [nitric oxide reductase rubredoxin domain] + NAD(+) + H(+) = 2 oxidized [nitric oxide reductase rubredoxin domain] + NADH. Its pathway is nitrogen metabolism; nitric oxide reduction. Functionally, one of at least two accessory proteins for anaerobic nitric oxide (NO) reductase. Reduces the rubredoxin moiety of NO reductase. The sequence is that of Nitric oxide reductase FlRd-NAD(+) reductase from Salmonella enteritidis PT4 (strain P125109).